The primary structure comprises 189 residues: GMP synthase [glutamine-hydrolyzing] subunit A (189 aa).

In terms of domain architecture, Glutamine amidotransferase type-1 spans 1 to 189 (MIVILNNGGQ…CKVCGFKFNE (189 aa)). Cysteine 76 (nucleophile) is an active-site residue. Catalysis depends on residues histidine 163 and glutamate 165.

As to quaternary structure, heterodimer composed of a glutamine amidotransferase subunit (A) and a GMP-binding subunit (B).

It catalyses the reaction XMP + L-glutamine + ATP + H2O = GMP + L-glutamate + AMP + diphosphate + 2 H(+). Its pathway is purine metabolism; GMP biosynthesis; GMP from XMP (L-Gln route): step 1/1. Catalyzes the synthesis of GMP from XMP. The sequence is that of GMP synthase [glutamine-hydrolyzing] subunit A from Methanococcus vannielii (strain ATCC 35089 / DSM 1224 / JCM 13029 / OCM 148 / SB).